The sequence spans 378 residues: 1-acyl-sn-glycerol-3-phosphate acyltransferase delta (378 aa).

The helical transmembrane segment at 11–31 threads the bilayer; that stretch reads FLCHLVFCYVFIASGLIINTI. The short motif at 96 to 101 is the HXXXXD motif element; it reads HKFEID. Transmembrane regions (helical) follow at residues 125 to 145, 307 to 327, and 338 to 358; these read ELAY…VFCS, TLVN…QFLV, and LASF…MIGV.

This sequence belongs to the 1-acyl-sn-glycerol-3-phosphate acyltransferase family. In terms of tissue distribution, widely expressed with highest levels in skeletal muscle, followed by heart, liver, prostate and thymus.

The protein localises to the endoplasmic reticulum membrane. It catalyses the reaction a 1-acyl-sn-glycero-3-phosphate + an acyl-CoA = a 1,2-diacyl-sn-glycero-3-phosphate + CoA. It carries out the reaction (4Z,7Z,10Z,13Z,16Z,19Z)-docosahexaenoyl-CoA + 1-hexadecanoyl-sn-glycero-3-phosphate = 1-hexadecanoyl-2-(4Z,7Z,10Z,13Z,16Z,19Z-docosahexaenoyl)-sn-glycero-3-phosphate + CoA. The catalysed reaction is 1-octadecanoyl-sn-glycero-3-phosphate + (9Z,12Z)-octadecadienoyl-CoA = 1-octadecanoyl-2-(9Z,12Z-octadecadienoyl)-sn-glycero-3-phosphate + CoA. The enzyme catalyses 1-octadecanoyl-sn-glycero-3-phosphate + (4Z,7Z,10Z,13Z,16Z,19Z)-docosahexaenoyl-CoA = 1-octadecanoyl-2-(4Z,7Z,10Z,13Z,16Z,19Z-docosahexaenoyl)-sn-glycero-3-phosphate + CoA. It catalyses the reaction (4Z,7Z,10Z,13Z,16Z,19Z)-docosahexaenoyl-CoA + 1-(9Z-octadecenoyl)-sn-glycero-3-phosphate = 1-(9Z-octadecenoyl)-2-(4Z,7Z,10Z,13Z,16Z,19Z-docosahexaenoyl)-sn-glycero-3-phosphate + CoA. It functions in the pathway phospholipid metabolism; CDP-diacylglycerol biosynthesis; CDP-diacylglycerol from sn-glycerol 3-phosphate: step 2/3. Its function is as follows. Converts 1-acyl-sn-glycerol-3-phosphate (lysophosphatidic acid or LPA) into 1,2-diacyl-sn-glycerol-3-phosphate (phosphatidic acid or PA) by incorporating an acyl moiety at the sn-2 position of the glycerol backbone. Exhibits high acyl-CoA specificity for polyunsaturated fatty acyl-CoA, especially docosahexaenoyl-CoA (22:6-CoA, DHA-CoA). The sequence is that of 1-acyl-sn-glycerol-3-phosphate acyltransferase delta (AGPAT4) from Homo sapiens (Human).